Consider the following 215-residue polypeptide: Cytochrome b6 (215 aa).

The chain crosses the membrane as a helical span at residues 32–52 (IFYCLGGITLTCFLVQVATGF). Cysteine 35 serves as a coordination point for heme c. Heme b is bound by residues histidine 86 and histidine 100. A run of 3 helical transmembrane segments spans residues 90 to 110 (ASMM…TGGF), 116 to 136 (LTWV…VTGY), and 186 to 206 (LHTF…FPMI). Positions 187 and 202 each coordinate heme b.

It belongs to the cytochrome b family. PetB subfamily. As to quaternary structure, the 4 large subunits of the cytochrome b6-f complex are cytochrome b6, subunit IV (17 kDa polypeptide, PetD), cytochrome f and the Rieske protein, while the 4 small subunits are PetG, PetL, PetM and PetN. The complex functions as a dimer. The cofactor is heme b. Requires heme c as cofactor.

It is found in the plastid. The protein localises to the chloroplast thylakoid membrane. Component of the cytochrome b6-f complex, which mediates electron transfer between photosystem II (PSII) and photosystem I (PSI), cyclic electron flow around PSI, and state transitions. The chain is Cytochrome b6 from Daucus carota (Wild carrot).